Consider the following 358-residue polypeptide: UDP-N-acetylglucosamine--N-acetylmuramyl-(pentapeptide) pyrophosphoryl-undecaprenol N-acetylglucosamine transferase (358 aa).

UDP-N-acetyl-alpha-D-glucosamine-binding positions include 13–15, Asn125, Arg161, Ser189, Ile244, and Gln288; that span reads TGG.

This sequence belongs to the glycosyltransferase 28 family. MurG subfamily.

It is found in the cell membrane. It catalyses the reaction di-trans,octa-cis-undecaprenyl diphospho-N-acetyl-alpha-D-muramoyl-L-alanyl-D-glutamyl-meso-2,6-diaminopimeloyl-D-alanyl-D-alanine + UDP-N-acetyl-alpha-D-glucosamine = di-trans,octa-cis-undecaprenyl diphospho-[N-acetyl-alpha-D-glucosaminyl-(1-&gt;4)]-N-acetyl-alpha-D-muramoyl-L-alanyl-D-glutamyl-meso-2,6-diaminopimeloyl-D-alanyl-D-alanine + UDP + H(+). It participates in cell wall biogenesis; peptidoglycan biosynthesis. Cell wall formation. Catalyzes the transfer of a GlcNAc subunit on undecaprenyl-pyrophosphoryl-MurNAc-pentapeptide (lipid intermediate I) to form undecaprenyl-pyrophosphoryl-MurNAc-(pentapeptide)GlcNAc (lipid intermediate II). In Baumannia cicadellinicola subsp. Homalodisca coagulata, this protein is UDP-N-acetylglucosamine--N-acetylmuramyl-(pentapeptide) pyrophosphoryl-undecaprenol N-acetylglucosamine transferase.